A 245-amino-acid polypeptide reads, in one-letter code: MINIGLSGSTGKMGKTILARIDKFKDCKISAKFNSTDDLDDLNNFCKNSDVIIDFSTPEILEKLINYALKHNTKLVIGTTGLQPKHFKLLEKAAKTLPILYSANMSTGANLLSYLAKKATKILDDYDIEILETHHRNKKDSPSGTAIMLAETIAREKGLNIVFNRGNRPRSEKEIGISSLRGGNVHSIHEISLLGDDEIITLKHEALNKNSFVIGAIKSAIWLQDKSPALYSMQDIYNYSLQKQL.

NAD(+) contacts are provided by residues 8 to 13 (GSTGKM), 78 to 80 (GTT), and 102 to 105 (SANM). H134 functions as the Proton donor/acceptor in the catalytic mechanism. H135 lines the (S)-2,3,4,5-tetrahydrodipicolinate pocket. K138 (proton donor) is an active-site residue. (S)-2,3,4,5-tetrahydrodipicolinate is bound at residue 144 to 145 (GT).

This sequence belongs to the DapB family.

It is found in the cytoplasm. The enzyme catalyses (S)-2,3,4,5-tetrahydrodipicolinate + NAD(+) + H2O = (2S,4S)-4-hydroxy-2,3,4,5-tetrahydrodipicolinate + NADH + H(+). The catalysed reaction is (S)-2,3,4,5-tetrahydrodipicolinate + NADP(+) + H2O = (2S,4S)-4-hydroxy-2,3,4,5-tetrahydrodipicolinate + NADPH + H(+). It functions in the pathway amino-acid biosynthesis; L-lysine biosynthesis via DAP pathway; (S)-tetrahydrodipicolinate from L-aspartate: step 4/4. Functionally, catalyzes the conversion of 4-hydroxy-tetrahydrodipicolinate (HTPA) to tetrahydrodipicolinate. This is 4-hydroxy-tetrahydrodipicolinate reductase from Rickettsia akari (strain Hartford).